Reading from the N-terminus, the 120-residue chain is UPF0231 protein CKO_03249 (120 aa).

It belongs to the UPF0231 family.

The chain is UPF0231 protein CKO_03249 from Citrobacter koseri (strain ATCC BAA-895 / CDC 4225-83 / SGSC4696).